We begin with the raw amino-acid sequence, 173 residues long: Photosystem I assembly protein Ycf3 (173 aa).

3 TPR repeats span residues 35–68, 72–105, and 120–153; these read AYVY…EESP, SETL…NSNQ, and GRTA…YPGG.

The protein belongs to the Ycf3 family.

The protein localises to the cellular thylakoid membrane. In terms of biological role, essential for the assembly of the photosystem I (PSI) complex. May act as a chaperone-like factor to guide the assembly of the PSI subunits. The sequence is that of Photosystem I assembly protein Ycf3 from Prochlorococcus marinus (strain MIT 9303).